The following is a 758-amino-acid chain: 5-methyltetrahydropteroyltriglutamate--homocysteine methyltransferase (758 aa).

5-methyltetrahydropteroyltri-L-glutamate is bound by residues 17–20 and lysine 110; that span reads RELK. L-homocysteine contacts are provided by residues 428 to 430 and glutamate 481; that span reads IGS. L-methionine is bound by residues 428–430 and glutamate 481; that span reads IGS. 5-methyltetrahydropteroyltri-L-glutamate is bound by residues 512–513 and tryptophan 558; that span reads RC. L-homocysteine is bound at residue aspartate 596. Aspartate 596 lines the L-methionine pocket. Glutamate 602 serves as a coordination point for 5-methyltetrahydropteroyltri-L-glutamate. Histidine 638, cysteine 640, and glutamate 662 together coordinate Zn(2+). Catalysis depends on histidine 691, which acts as the Proton donor. Residue cysteine 723 participates in Zn(2+) binding.

Belongs to the vitamin-B12 independent methionine synthase family. It depends on Zn(2+) as a cofactor.

The catalysed reaction is 5-methyltetrahydropteroyltri-L-glutamate + L-homocysteine = tetrahydropteroyltri-L-glutamate + L-methionine. It participates in amino-acid biosynthesis; L-methionine biosynthesis via de novo pathway; L-methionine from L-homocysteine (MetE route): step 1/1. Functionally, catalyzes the transfer of a methyl group from 5-methyltetrahydrofolate to homocysteine resulting in methionine formation. The protein is 5-methyltetrahydropteroyltriglutamate--homocysteine methyltransferase of Thermosynechococcus vestitus (strain NIES-2133 / IAM M-273 / BP-1).